The primary structure comprises 423 residues: Sphingomyelin phosphodiesterase 2 (423 aa).

Glu-49 lines the Mg(2+) pocket. His-272 serves as the catalytic Proton acceptor. A run of 2 helical transmembrane segments spans residues Val-330–Ala-350 and Ala-354–Phe-374. The tract at residues Gln-400 to Gln-423 is disordered.

This sequence belongs to the neutral sphingomyelinase family. Mg(2+) serves as cofactor.

The protein resides in the cell membrane. The catalysed reaction is a sphingomyelin + H2O = phosphocholine + an N-acylsphing-4-enine + H(+). It carries out the reaction an N-(acyl)-sphingosylphosphocholine + H2O = an N-acyl-sphingoid base + phosphocholine + H(+). It catalyses the reaction 1-O-octadecyl-sn-glycero-3-phosphocholine + H2O = 1-O-octadecyl-sn-glycerol + phosphocholine + H(+). The enzyme catalyses 1-O-hexadecyl-sn-glycero-3-phosphocholine + H2O = 1-O-hexadecyl-sn-glycerol + phosphocholine + H(+). The catalysed reaction is 1-hexadecanoyl-sn-glycero-3-phosphocholine + H2O = 1-hexadecanoyl-sn-glycerol + phosphocholine + H(+). It carries out the reaction a sphingosylphosphocholine + H2O = a sphingoid base + phosphocholine + H(+). It functions in the pathway lipid metabolism; sphingolipid metabolism. Its function is as follows. Catalyzes, at least in vitro, the hydrolysis of sphingomyelin to form ceramide and phosphocholine. Also hydrolyzes 1-O-alkyl-2-lyso-sn-glycero-3-phosphocholine (lyso-platelet-activating factor) in vivo. Also acts on 1-acyl-2-lyso-sn-glycero-3-phosphocholine (lyso-PC) and sphingosylphosphocholine. This Homo sapiens (Human) protein is Sphingomyelin phosphodiesterase 2.